A 502-amino-acid polypeptide reads, in one-letter code: Probable glycine dehydrogenase (decarboxylating) subunit 2 (502 aa).

An N6-(pyridoxal phosphate)lysine modification is found at Lys273.

This sequence belongs to the GcvP family. C-terminal subunit subfamily. As to quaternary structure, the glycine cleavage system is composed of four proteins: P, T, L and H. In this organism, the P 'protein' is a heterodimer of two subunits. Pyridoxal 5'-phosphate serves as cofactor.

It catalyses the reaction N(6)-[(R)-lipoyl]-L-lysyl-[glycine-cleavage complex H protein] + glycine + H(+) = N(6)-[(R)-S(8)-aminomethyldihydrolipoyl]-L-lysyl-[glycine-cleavage complex H protein] + CO2. In terms of biological role, the glycine cleavage system catalyzes the degradation of glycine. The P protein binds the alpha-amino group of glycine through its pyridoxal phosphate cofactor; CO(2) is released and the remaining methylamine moiety is then transferred to the lipoamide cofactor of the H protein. The chain is Probable glycine dehydrogenase (decarboxylating) subunit 2 from Thermococcus kodakarensis (strain ATCC BAA-918 / JCM 12380 / KOD1) (Pyrococcus kodakaraensis (strain KOD1)).